The primary structure comprises 414 residues: Serine/threonine transporter SstT (414 aa).

Residues 2-15 are Cytoplasmic-facing; that stretch reads TTQRSPGLFRRLAH. Residues 16–36 traverse the membrane as a helical segment; that stretch reads GSLVKQILVGLVLGILLAWIS. The Periplasmic segment spans residues 37-45; it reads KPAAEAVGL. A helical transmembrane segment spans residues 46–66; that stretch reads LGTLFVGALKAVAPILVLMLV. Over 67-83 the chain is Cytoplasmic; that stretch reads MASIANHQHGQKTNIRP. The chain crosses the membrane as a helical span at residues 84–104; the sequence is ILFLYLLGTFSAALAAVVFSF. Residues 105–142 are Periplasmic-facing; that stretch reads AFPSTLHLSSSAGDISPPSGIVEVMRGLVMSMVSNPID. Residues 143-163 traverse the membrane as a helical segment; sequence ALLKGNYIGILVWAIGLGFAL. The Cytoplasmic segment spans residues 164-179; the sequence is RHGNETTKNLVNDMSN. A helical transmembrane segment spans residues 180-200; the sequence is AVTFMVKLVIRFAPFGIFGLV. Over 201–217 the chain is Periplasmic; the sequence is SSTLATTGFSTLWGYAQ. Residues 218-238 traverse the membrane as a helical segment; that stretch reads LLVVLVGCMLLVALVVNPLLV. Residues 239–299 are Cytoplasmic-facing; that stretch reads WWKIRRNPFP…VSIPLGATIN (61 aa). The helical transmembrane segment at 300–320 threads the bilayer; that stretch reads MAGAAITITVLTLAAVNTLGI. The Periplasmic portion of the chain corresponds to 321 to 331; that stretch reads PVDLPTALLLS. Residues 332-352 form a helical membrane-spanning segment; it reads VVASLCACGASGVAGGSLLLI. Residues 353–414 are Cytoplasmic-facing; the sequence is PLACNMFGIS…DRLANSALRN (62 aa).

This sequence belongs to the dicarboxylate/amino acid:cation symporter (DAACS) (TC 2.A.23) family.

The protein resides in the cell inner membrane. It carries out the reaction L-serine(in) + Na(+)(in) = L-serine(out) + Na(+)(out). The catalysed reaction is L-threonine(in) + Na(+)(in) = L-threonine(out) + Na(+)(out). Functionally, involved in the import of serine and threonine into the cell, with the concomitant import of sodium (symport system). The sequence is that of Serine/threonine transporter SstT from Shigella flexneri.